Here is a 186-residue protein sequence, read N- to C-terminus: ADP compounds hydrolase NudE (186 aa).

Position 40 (Glu40) interacts with substrate. In terms of domain architecture, Nudix hydrolase spans 45–172 (TNREAVMIVP…DFNEARNVSA (128 aa)). The Nudix box motif lies at 80-101 (GLIDPGESVYEAANRELKEEVG). 2 residues coordinate a divalent metal cation: Glu95 and Glu99. Ser118 contributes to the substrate binding site.

This sequence belongs to the Nudix hydrolase family. Homodimer. Requires Mg(2+) as cofactor.

It carries out the reaction ADP-D-ribose + H2O = D-ribose 5-phosphate + AMP + 2 H(+). In terms of biological role, active on adenosine(5')triphospho(5')adenosine (Ap3A), ADP-ribose, NADH, adenosine(5')diphospho(5')adenosine (Ap2A). This is ADP compounds hydrolase NudE (nudE) from Escherichia coli (strain K12).